Reading from the N-terminus, the 476-residue chain is Eukaryotic translation initiation factor 3 subunit L (476 aa).

Residues 257 to 452 enclose the PCI domain; sequence DAIRMFSHIL…DLDYALENDL (196 aa).

The protein belongs to the eIF-3 subunit L family. As to quaternary structure, component of the eukaryotic translation initiation factor 3 (eIF-3) complex.

The protein localises to the cytoplasm. Functionally, component of the eukaryotic translation initiation factor 3 (eIF-3) complex, which is involved in protein synthesis of a specialized repertoire of mRNAs and, together with other initiation factors, stimulates binding of mRNA and methionyl-tRNAi to the 40S ribosome. The eIF-3 complex specifically targets and initiates translation of a subset of mRNAs involved in cell proliferation. This is Eukaryotic translation initiation factor 3 subunit L from Aspergillus fumigatus (strain CBS 144.89 / FGSC A1163 / CEA10) (Neosartorya fumigata).